Here is a 522-residue protein sequence, read N- to C-terminus: MEEQVPSSANILVIGGGPAGSYAATVLAREGFEVILLEKDVFPRYHIGESMLPSCRPFLKFIDCEEKLKNHGFTMKPGAAVKLNQYKREGYTDFISTNPDNAARNVVRSEFDELLLRHASEMGVHVYEGVRVEEIHFAPDEPTRPISLTWSKEDKTRGTVSFNWLVDASGRNGLMSTRYLKNRTFNKTLRNVAVWGYWTGTSCYAPGTTRENAPWFEALIDETGWAWFIPLHNGTTSVGVVLVEEESKRKKSQYRSECKDKSPSEIQHDCYMADLQRAPGLIQLLGTATFEGKLMSAGDYSYHATEYAGSNFRLAGDAGAFIDPFFSSGIHLALTGGLSAASTIAASIRGDCTESEACGFHNSKVGTAYTRFLLVVLGVYKQIRSQETAVLYDVDEDNFDKAFHFLRPVIQGCADADEGLTEAELQSTLDFCTNVFAPTQPETHEAAIQRLGSLADPDGPLLDTDTIDKLTGTDMEAKHALWKINARKPLHSMYDCKRNFGTEIINGFYVKMEQGVLGLVRT.

Residues G16, A19, and E49 each contribute to the FAD site. Chloride contacts are provided by S328 and G329. Residue I330 participates in FAD binding.

It belongs to the flavin-dependent halogenase family.

It carries out the reaction melleolide F + FADH2 + chloride + O2 = 6'-chloromelleolide F + FAD + 2 H2O + H(+). Its function is as follows. Flavin-dependent halogenase involved in the biosynthesis of melleolides, a range of antifungal and phytotoxic polyketide derivatives composed of an orsellinic acid (OA) moiety esterified to various sesquiterpene alcohols. The halogenase catalyzes the transfer of a single chlorine atom to the melleolide backbone, resulting in a 6'-chloromelleolide product. The enzyme acts on free substrate and does not depend on carrier-protein-dependent acceptor molecules. The polypeptide is Flavin-dependent halogenase armH1 (Armillaria mellea (Honey mushroom)).